Consider the following 245-residue polypeptide: Pyridoxine 5'-phosphate synthase (245 aa).

Asparagine 7 contacts 3-amino-2-oxopropyl phosphate. 9–10 contacts 1-deoxy-D-xylulose 5-phosphate; the sequence is DH. 3-amino-2-oxopropyl phosphate is bound at residue arginine 18. Residue histidine 43 is the Proton acceptor of the active site. Positions 45 and 50 each coordinate 1-deoxy-D-xylulose 5-phosphate. Residue glutamate 70 is the Proton acceptor of the active site. Threonine 100 is a 1-deoxy-D-xylulose 5-phosphate binding site. The active-site Proton donor is the histidine 190. Residues glycine 191 and 212 to 213 each bind 3-amino-2-oxopropyl phosphate; that span reads GH.

Belongs to the PNP synthase family. In terms of assembly, homooctamer; tetramer of dimers.

Its subcellular location is the cytoplasm. The enzyme catalyses 3-amino-2-oxopropyl phosphate + 1-deoxy-D-xylulose 5-phosphate = pyridoxine 5'-phosphate + phosphate + 2 H2O + H(+). It participates in cofactor biosynthesis; pyridoxine 5'-phosphate biosynthesis; pyridoxine 5'-phosphate from D-erythrose 4-phosphate: step 5/5. Catalyzes the complicated ring closure reaction between the two acyclic compounds 1-deoxy-D-xylulose-5-phosphate (DXP) and 3-amino-2-oxopropyl phosphate (1-amino-acetone-3-phosphate or AAP) to form pyridoxine 5'-phosphate (PNP) and inorganic phosphate. This is Pyridoxine 5'-phosphate synthase from Prochlorococcus marinus (strain MIT 9313).